A 586-amino-acid polypeptide reads, in one-letter code: Phosphomethylpyrimidine synthase (586 aa).

The interval 1–58 (MKQSVSAEQIELKSSLPGSKKVYVDGPREGMKVPMREIEQSDTNGVPNPPIRVYDTSG) is disordered. Residues 22 to 39 (VYVDGPREGMKVPMREIE) are compositionally biased toward basic and acidic residues. Residues Asn193, Met222, Tyr251, His287, 307-309 (SRG), 348-351 (DGLR), and Glu387 contribute to the substrate site. His391 is a Zn(2+) binding site. Substrate is bound at residue Tyr414. Zn(2+) is bound at residue His455. Residues Cys535, Cys538, and Cys543 each contribute to the [4Fe-4S] cluster site.

The protein belongs to the ThiC family. [4Fe-4S] cluster is required as a cofactor.

It carries out the reaction 5-amino-1-(5-phospho-beta-D-ribosyl)imidazole + S-adenosyl-L-methionine = 4-amino-2-methyl-5-(phosphooxymethyl)pyrimidine + CO + 5'-deoxyadenosine + formate + L-methionine + 3 H(+). It functions in the pathway cofactor biosynthesis; thiamine diphosphate biosynthesis. Its function is as follows. Catalyzes the synthesis of the hydroxymethylpyrimidine phosphate (HMP-P) moiety of thiamine from aminoimidazole ribotide (AIR) in a radical S-adenosyl-L-methionine (SAM)-dependent reaction. The chain is Phosphomethylpyrimidine synthase from Bacillus anthracis (strain A0248).